Reading from the N-terminus, the 460-residue chain is ESX-1 secretion-associated protein EspB (460 aa).

3 disordered regions span residues 92–116 (LDNDGEGTVQAESAGAVGGDSSAEL), 303–335 (PSDGSGVTPGTGMPAAPMVPPTGSPGGGLPADT), and 405–441 (LGGGGMGMPMGAAHQGQGGAKSKGSQQEDEALYTEDR).

Post-translationally, cleaved in the C-terminal region by MycP1.

The protein localises to the secreted. This chain is ESX-1 secretion-associated protein EspB, found in Mycobacterium tuberculosis (strain CDC 1551 / Oshkosh).